Here is a 301-residue protein sequence, read N- to C-terminus: Mitochondrial carnitine/acylcarnitine carrier protein (301 aa).

The residue at position 2 (A2) is an N-acetylalanine. Residues 2 to 12 lie on the Cytoplasmic side of the membrane; that stretch reads ADQPKPISPLK. Solcar repeat units follow at residues 8–99, 108–196, and 207–293; these read ISPL…GKKL, LSYP…VKNI, and LSVP…AMKF. Residues 13–31 form a helical membrane-spanning segment; sequence NLLAGGFGGVCLVFVGHPL. Residues 32–73 are Mitochondrial matrix-facing; sequence DTVKVRLQTQPPSLPGQPPMYSGTFDCFRKTLFREGIRGLYR. Residues 74-93 form a helical membrane-spanning segment; the sequence is GMAAPIIGVTPMFAVCFFGF. Residues 94 to 112 lie on the Cytoplasmic side of the membrane; it reads GLGKKLQQKHPEDVLSYPQ. A helical membrane pass occupies residues 113–131; it reads LFAAGMLSGIFTTGIMTPG. Residues 132 to 170 are Mitochondrial matrix-facing; that stretch reads ERIKCLLQIQASSGETKYTGTLDCAKKLYQEFGIRGIYK. An N6-acetyllysine mark is found at K148 and K157. An N6-acetyllysine; alternate modification is found at K170. K170 carries the N6-succinyllysine; alternate modification. A helical transmembrane segment spans residues 171–190; the sequence is GTVVTLMRDVPASGMYFMTY. Topologically, residues 191-211 are cytoplasmic; the sequence is EWVKNIFTPEGKRVSELSVPR. A helical membrane pass occupies residues 212–230; that stretch reads VLVAGGIAGIFNWAVAIPP. Topologically, residues 231-267 are mitochondrial matrix; it reads DVLKSRFQTAPPGKYPNGFRDVLRELIPDEGVTSLYK. A helical transmembrane segment spans residues 268-287; sequence GFNAVMIRAFPANAACFLGF. At 288-301 the chain is on the cytoplasmic side; it reads EVAMKFLNWATPNL.

The protein belongs to the mitochondrial carrier (TC 2.A.29) family.

It localises to the mitochondrion inner membrane. The enzyme catalyses O-acetyl-(R)-carnitine(in) + (R)-carnitine(out) = O-acetyl-(R)-carnitine(out) + (R)-carnitine(in). It catalyses the reaction an O-acyl-(R)-carnitine(in) + (R)-carnitine(out) = an O-acyl-(R)-carnitine(out) + (R)-carnitine(in). It carries out the reaction O-propanoyl-(R)-carnitine(in) + (R)-carnitine(out) = O-propanoyl-(R)-carnitine(out) + (R)-carnitine(in). The catalysed reaction is O-hexadecanoyl-(R)-carnitine(in) + (R)-carnitine(out) = O-hexadecanoyl-(R)-carnitine(out) + (R)-carnitine(in). The enzyme catalyses O-octanoyl-(R)-carnitine(in) + (R)-carnitine(out) = O-octanoyl-(R)-carnitine(out) + (R)-carnitine(in). It catalyses the reaction (R)-carnitine(in) = (R)-carnitine(out). Mediates the electroneutral exchange of acylcarnitines (O-acyl-(R)-carnitine or L-acylcarnitine) of different acyl chain lengths (ranging from O-acetyl-(R)-carnitine to long-chain O-acyl-(R)-carnitines) with free carnitine ((R)-carnitine or L-carnitine) across the mitochondrial inner membrane, via a ping-pong mechanism. Key player in the mitochondrial oxidation pathway, it translocates the fatty acids in the form of acylcarnitines into the mitochondrial matrix, where the carnitine palmitoyltransferase 2 (CPT-2) activates them to undergo fatty acid beta-oxidation. Catalyzes the unidirectional transport (uniport) of carnitine at lower rates than the antiport (exchange). The chain is Mitochondrial carnitine/acylcarnitine carrier protein (SLC25A20) from Macaca fascicularis (Crab-eating macaque).